A 763-amino-acid polypeptide reads, in one-letter code: MGKRRSRGRSQLLSTMTKKQKKHLRDFGEEHPFYDRVSKKEVKPQICQLSESSDSSHSESESESEQEHVSGYHRLLATLKNISEEEEEEEEEEEEEEEDKEEVDDSAVGDSEMNGEDGGEDVRVEETAESSETQDHMSLADNSKGKDGEEPPGVSQKSSEEFTDVKHESLFSLETNFLEEESGGSYSQRTSQDPFQHHINKELQEKEIQAAASSPAATQQLKWPVLGHLVFSSKFQKMETFKPPKDIDLKSLHLQKPLESTWAKTNSQFLSGPGPQKSSSCFTPLQKELFLIMNSYRDLFYPERTALKNGEEVRHVYCLHAINHVLKANAQVLANNSRRRTQKLGVGDDDDFRDQGLTRPKVLIVVPFREAALRVVQLFISLLEGDSKKKIIVSNKKRFQGEYGSDPEERPPNLKRPEDYEAVFVGNIDDHFRIGVAILQRSIRLYAPFYSSDILIASPLGLRTIIGGEGEKKRDFDFLSSIELLIIDQADIYLMQNWEHVLHLMNHMNLLPLDSHGVNFSRVRMWSLNNWSKYYRQTLLFGALQDAQINSVFNKHCVNAQGQVAVRNVPMTGSISHVLVQLPHVFQRMEAQDLASVIDARFHFFINKILPQYRDAVMSHTLIYVPSYFDFVRLRNYFKKEELNFTHICEYTQRSGVSRARHFFLQGEKQFLLLTERFHFYKRYTIKGIRNLIFYELPTYAHFYSEVCNMLRATSRGEEATWTCTVLYSKYDAQRLAAVVGVERAAQMLQSPKSVHLFITGEK.

A disordered region spans residues 1–164 (MGKRRSRGRS…SQKSSEEFTD (164 aa)). Promotes p53/TP53 degradation regions lie at residues 1–190 (MGKR…SQRT) and 580–642 (VQLP…KKEE). A Phosphoserine modification is found at serine 10. The segment covering 25-43 (RDFGEEHPFYDRVSKKEVK) has biased composition (basic and acidic residues). Serine 52, serine 60, and serine 64 each carry phosphoserine. Residues 54–70 (DSSHSESESESEQEHVS) show a composition bias toward basic and acidic residues. Residues 84–119 (EEEEEEEEEEEEEEEDKEEVDDSAVGDSEMNGEDGG) are compositionally biased toward acidic residues. The represses p53/TP53 degradation stretch occupies residues 643–704 (LNFTHICEYT…YELPTYAHFY (62 aa)).

Belongs to the UTP25 family. In terms of assembly, interacts with CAPN3; the interaction is required for CAPN3 translocation to the nucleolus. In terms of processing, phosphorylated. Phosphorylation is required to promote p53/TP53 degradation in the nucleolus which promotes cell cycle progression and liver development.

The protein resides in the nucleus. It is found in the nucleolus. Component of the ribosomal small subunit processome for the biogenesis of ribosomes, functions in pre-ribosomal RNA (pre-rRNA) processing. Essential for embryonic development in part through the regulation of p53 pathway. Controls the expansion growth of digestive organs and liver. Also involved in the sympathetic neuronal development. Mediates, with CAPN3, the proteasome-independent degradation of p53/TP53. This is U3 small nucleolar RNA-associated protein 25 homolog from Rattus norvegicus (Rat).